The following is a 540-amino-acid chain: Chaperonin GroEL (540 aa).

ATP is bound by residues 29–32 (TLGP), 86–90 (DGTTT), Gly413, 477–479 (DAL), and Asp493.

This sequence belongs to the chaperonin (HSP60) family. As to quaternary structure, forms a cylinder of 14 subunits composed of two heptameric rings stacked back-to-back. Interacts with the co-chaperonin GroES.

The protein localises to the cytoplasm. The enzyme catalyses ATP + H2O + a folded polypeptide = ADP + phosphate + an unfolded polypeptide.. Together with its co-chaperonin GroES, plays an essential role in assisting protein folding. The GroEL-GroES system forms a nano-cage that allows encapsulation of the non-native substrate proteins and provides a physical environment optimized to promote and accelerate protein folding. The chain is Chaperonin GroEL from Clostridium botulinum (strain Eklund 17B / Type B).